Reading from the N-terminus, the 92-residue chain is Small ribosomal subunit protein uS19 (92 aa).

The protein belongs to the universal ribosomal protein uS19 family.

Functionally, protein S19 forms a complex with S13 that binds strongly to the 16S ribosomal RNA. The chain is Small ribosomal subunit protein uS19 from Magnetococcus marinus (strain ATCC BAA-1437 / JCM 17883 / MC-1).